Reading from the N-terminus, the 165-residue chain is Polcalcin Jun o 2 (165 aa).

EF-hand domains follow at residues 22 to 57 (QSVH…LGSD), 58 to 86 (VGEA…FVDL), 91 to 126 (ASVK…VGEP), and 127 to 162 (CTIE…EMTD). Positions 35, 37, 39, 41, 46, 71, 73, 75, 77, 82, 104, 106, 108, 110, 115, 140, 142, 144, and 151 each coordinate Ca(2+).

The polypeptide is Polcalcin Jun o 2 (Juniperus oxycedrus (Prickly juniper)).